Here is a 63-residue protein sequence, read N- to C-terminus: Large ribosomal subunit protein eL29 (63 aa).

A compositionally biased stretch (basic residues) spans 1–26 (MAKSKNHTAHNQTRKAHRNGIKKPKT). The interval 1–35 (MAKSKNHTAHNQTRKAHRNGIKKPKTYKYPSLKGV) is disordered.

This sequence belongs to the eukaryotic ribosomal protein eL29 family. As to quaternary structure, component of the large ribosomal subunit. Mature ribosomes consist of a small (40S) and a large (60S) subunit. The 40S subunit contains about 32 different proteins and 1 molecule of RNA (18S). The 60S subunit contains 45 different proteins and 3 molecules of RNA (25S, 5.8S and 5S).

It is found in the cytoplasm. In terms of biological role, component of the ribosome, a large ribonucleoprotein complex responsible for the synthesis of proteins in the cell. The small ribosomal subunit (SSU) binds messenger RNAs (mRNAs) and translates the encoded message by selecting cognate aminoacyl-transfer RNA (tRNA) molecules. The large subunit (LSU) contains the ribosomal catalytic site termed the peptidyl transferase center (PTC), which catalyzes the formation of peptide bonds, thereby polymerizing the amino acids delivered by tRNAs into a polypeptide chain. The nascent polypeptides leave the ribosome through a tunnel in the LSU and interact with protein factors that function in enzymatic processing, targeting, and the membrane insertion of nascent chains at the exit of the ribosomal tunnel. In Candida albicans (strain SC5314 / ATCC MYA-2876) (Yeast), this protein is Large ribosomal subunit protein eL29.